The chain runs to 300 residues: tRNA dimethylallyltransferase (300 aa).

Residue 9-16 coordinates ATP; the sequence is GPTASGKS. Position 11-16 (11-16) interacts with substrate; it reads TASGKS. The segment at 34–37 is interaction with substrate tRNA; that stretch reads DSKQ.

It belongs to the IPP transferase family. As to quaternary structure, monomer. Mg(2+) serves as cofactor.

It carries out the reaction adenosine(37) in tRNA + dimethylallyl diphosphate = N(6)-dimethylallyladenosine(37) in tRNA + diphosphate. Its function is as follows. Catalyzes the transfer of a dimethylallyl group onto the adenine at position 37 in tRNAs that read codons beginning with uridine, leading to the formation of N6-(dimethylallyl)adenosine (i(6)A). In Ehrlichia canis (strain Jake), this protein is tRNA dimethylallyltransferase.